The primary structure comprises 112 residues: Large ribosomal subunit protein uL22 (112 aa).

This sequence belongs to the universal ribosomal protein uL22 family. Part of the 50S ribosomal subunit.

In terms of biological role, this protein binds specifically to 23S rRNA; its binding is stimulated by other ribosomal proteins, e.g. L4, L17, and L20. It is important during the early stages of 50S assembly. It makes multiple contacts with different domains of the 23S rRNA in the assembled 50S subunit and ribosome. Functionally, the globular domain of the protein is located near the polypeptide exit tunnel on the outside of the subunit, while an extended beta-hairpin is found that lines the wall of the exit tunnel in the center of the 70S ribosome. This is Large ribosomal subunit protein uL22 from Finegoldia magna (strain ATCC 29328 / DSM 20472 / WAL 2508) (Peptostreptococcus magnus).